The chain runs to 129 residues: Large ribosomal subunit protein bL12c (129 aa).

This sequence belongs to the bacterial ribosomal protein bL12 family. Homodimer. Part of the ribosomal stalk of the 50S ribosomal subunit. Forms a multimeric L10(L12)X complex, where L10 forms an elongated spine to which 2 to 4 L12 dimers bind in a sequential fashion. Binds GTP-bound translation factors.

It is found in the plastid. It localises to the chloroplast. Forms part of the ribosomal stalk which helps the ribosome interact with GTP-bound translation factors. Is thus essential for accurate translation. The chain is Large ribosomal subunit protein bL12c from Oltmannsiellopsis viridis (Marine flagellate).